The following is a 162-amino-acid chain: Phospholipase A and acyltransferase 3 (162 aa).

Over 1–133 (MRAPIPEPKP…VARSDQVRDV (133 aa)) the chain is Cytoplasmic. One can recognise an LRAT domain in the interval 13-129 (LIEIFRPFYR…LRYGVARSDQ (117 aa)). Catalysis depends on residues His23 and His35. Cys113 acts as the Acyl-thioester intermediate in catalysis. A helical transmembrane segment spans residues 134–154 (IIAASVAGMGLAAMSLIGVMF). Topologically, residues 155 to 162 (SRNKRQKQ) are lumenal.

It belongs to the H-rev107 family. In terms of assembly, interacts with PPP2R1A; this interaction might decrease PP2A activity. In terms of tissue distribution, widely expressed. Low expression, if any, in hematopoietic cells and thymus. In testis, confined to round spermatids. Expressed in normal ovarian epithelial cells. Down-regulated in some ovarian carcinomas and testicular germ cell tumors. Highly expressed in white adipose tissue.

The protein localises to the cell membrane. The protein resides in the cytoplasm. It is found in the cytosol. It localises to the perinuclear region. Its subcellular location is the peroxisome membrane. The protein localises to the mitochondrion membrane. The protein resides in the nucleus envelope. It is found in the lysosome membrane. It localises to the endoplasmic reticulum membrane. The enzyme catalyses a 1,2-diacyl-sn-glycero-3-phosphocholine + H2O = a 1-acyl-sn-glycero-3-phosphocholine + a fatty acid + H(+). It carries out the reaction a 1,2-diacyl-sn-glycero-3-phosphocholine + H2O = a 2-acyl-sn-glycero-3-phosphocholine + a fatty acid + H(+). It catalyses the reaction 1,2-dihexadecanoyl-sn-glycero-3-phosphocholine + H2O = 1-hexadecanoyl-sn-glycero-3-phosphocholine + hexadecanoate + H(+). The catalysed reaction is 1,2-dihexadecanoyl-sn-glycero-3-phosphocholine + H2O = 2-hexadecanoyl-sn-glycero-3-phosphocholine + hexadecanoate + H(+). The enzyme catalyses 1-hexadecanoyl-2-(9Z-octadecenoyl)-sn-glycero-3-phosphocholine + H2O = 2-(9Z-octadecenoyl)-sn-glycero-3-phosphocholine + hexadecanoate + H(+). It carries out the reaction 1-hexadecanoyl-2-(9Z-octadecenoyl)-sn-glycero-3-phosphocholine + H2O = 1-hexadecanoyl-sn-glycero-3-phosphocholine + (9Z)-octadecenoate + H(+). It catalyses the reaction 1-hexadecanoyl-2-(5Z,8Z,11Z,14Z-eicosatetraenoyl)-sn-glycero-3-phosphocholine + H2O = 1-hexadecanoyl-sn-glycero-3-phosphocholine + (5Z,8Z,11Z,14Z)-eicosatetraenoate + H(+). The catalysed reaction is 1-hexadecanoyl-2-(5Z,8Z,11Z,14Z-eicosatetraenoyl)-sn-glycero-3-phosphocholine + H2O = 2-(5Z,8Z,11Z,14Z)-eicosatetraenoyl-sn-glycero-3-phosphocholine + hexadecanoate + H(+). The enzyme catalyses 1-hexadecanoyl-2-(9Z,12Z-octadecadienoyl)-sn-glycero-3-phosphoethanolamine + H2O = 1-hexadecanoyl-sn-glycero-3-phosphoethanolamine + (9Z,12Z)-octadecadienoate + H(+). It carries out the reaction 1-hexadecanoyl-2-(9Z,12Z-octadecadienoyl)-sn-glycero-3-phosphoethanolamine + H2O = 2-(9Z,12Z)-octadecadienoyl-sn-glycero-3-phosphoethanolamine + hexadecanoate + H(+). It catalyses the reaction 1-hexadecanoyl-2-(5Z,8Z,11Z,14Z-eicosatetraenoyl)-sn-glycero-3-phosphoethanolamine + H2O = 1-hexadecanoyl-sn-glycero-3-phosphoethanolamine + (5Z,8Z,11Z,14Z)-eicosatetraenoate + H(+). The catalysed reaction is 1-hexadecanoyl-2-(5Z,8Z,11Z,14Z-eicosatetraenoyl)-sn-glycero-3-phosphoethanolamine + H2O = 2-(5Z,8Z,11Z,14Z)-eicosatetraenoyl-sn-glycero-3-phosphoethanolamine + hexadecanoate + H(+). The enzyme catalyses 1-hexanoyl-2-acyl-sn-glycero-3-phosphocholine + H2O = hexanoate + a 2-acyl-sn-glycero-3-phosphocholine + H(+). It carries out the reaction 1-hexanoyl-2-acyl-sn-glycero-3-phosphocholine + H2O = 1-hexanoyl-sn-glycero-3-phosphocholine + a fatty acid + H(+). It catalyses the reaction 1,2-diheptadecanoyl-sn-glycero-3-phosphoethanolamine + 1-(9Z-octadecenoyl)-2-hexadecanoyl-sn-glycero-3-phosphocholine = 1,2-diheptadecanoyl-sn-glycero-3-phospho-N-hexadecanoyl-ethanolamine + 1-(9Z-octadecenoyl)-sn-glycero-3-phosphocholine + H(+). The catalysed reaction is 1,2-diheptadecanoyl-sn-glycero-3-phosphoethanolamine + 1-(9Z-octadecenoyl)-2-hexadecanoyl-sn-glycero-3-phosphocholine = 1,2-diheptadecanoyl-sn-glycero-3-phospho-N-(9Z-octadecenoyl)-ethanolamine + 2-hexadecanoyl-sn-glycero-3-phosphocholine + H(+). The enzyme catalyses 1,2-dihexanoyl-sn-glycero-3-phosphoethanolamine + 2-heptanoyl-sn-glycero-3-phosphocholine = hexanoyl-sn-glycero-3-phosphoethanolamine + 1-hexanoyl-2-heptanoyl-sn-glycero-3-phosphocholine. It carries out the reaction 1-hexadecanoyl-2-octadecanoyl-sn-glycero-3-phosphocholine + H2O = octadecanoate + 1-hexadecanoyl-sn-glycero-3-phosphocholine + H(+). It catalyses the reaction 1-hexadecanoyl-2-octadecanoyl-sn-glycero-3-phosphocholine + H2O = 2-octadecanoyl-sn-glycero-3-phosphocholine + hexadecanoate + H(+). The catalysed reaction is 1-octadecanoyl-2-hexadecanoyl-sn-glycero-3-phosphocholine + H2O = 1-octadecanoyl-sn-glycero-3-phosphocholine + hexadecanoate + H(+). The enzyme catalyses 1-octadecanoyl-2-hexadecanoyl-sn-glycero-3-phosphocholine + H2O = 2-hexadecanoyl-sn-glycero-3-phosphocholine + octadecanoate + H(+). It carries out the reaction 1-hexadecanoyl-2-(9Z,12Z-octadecadienoyl)-sn-glycero-3-phosphocholine + H2O = (9Z,12Z)-octadecadienoate + 1-hexadecanoyl-sn-glycero-3-phosphocholine + H(+). It catalyses the reaction 1-hexadecanoyl-2-(9Z,12Z-octadecadienoyl)-sn-glycero-3-phosphocholine + H2O = 2-(9Z,12Z-octadecadienoyl)-sn-glycero-3-phosphocholine + hexadecanoate + H(+). The catalysed reaction is 1,2-di-(9Z-octadecenoyl)-sn-glycero-3-phosphocholine + H2O = 2-(9Z-octadecenoyl)-sn-glycero-3-phosphocholine + (9Z)-octadecenoate + H(+). The enzyme catalyses 1,2-dihexadecanoyl-sn-glycero-3-phosphocholine + H2O = hexadecanoyl-sn-glycero-3-phosphocholine + hexadecanoate + H(+). It carries out the reaction 1,2-di-(9Z-octadecenoyl)-sn-glycero-3-phosphocholine + H2O = 1-(9Z-octadecenoyl)-sn-glycero-3-phosphocholine + (9Z)-octadecenoate + H(+). It catalyses the reaction 1,2-di-(9Z-octadecenoyl)-sn-glycero-3-phosphoethanolamine + 1,2-dihexadecanoyl-sn-glycero-3-phosphocholine = hexadecanoyl-sn-glycero-3-phosphocholine + N-hexadecanoyl-1,2-di-(9Z-octadecenoyl)-sn-glycero-3-phosphoethanolamine + H(+). The catalysed reaction is 1,2-di-(9Z,12Z-octadecadienoyl)-sn-glycero-3-phosphocholine + H2O = 1-(9Z,12Z)-octadecadienoyl-sn-glycero-3-phosphocholine + (9Z,12Z)-octadecadienoate + H(+). Its function is as follows. Exhibits both phospholipase A1/2 and acyltransferase activities. Shows phospholipase A1 (PLA1) and A2 (PLA2) activity, catalyzing the calcium-independent release of fatty acids from the sn-1 or sn-2 position of glycerophospholipids. For most substrates, PLA1 activity is much higher than PLA2 activity. Shows O-acyltransferase activity,catalyzing the transfer of a fatty acyl group from glycerophospholipid to the hydroxyl group of lysophospholipid. Shows N-acyltransferase activity, catalyzing the calcium-independent transfer of a fatty acyl group at the sn-1 position of phosphatidylcholine (PC) and other glycerophospholipids to the primary amine of phosphatidylethanolamine (PE), forming N-acylphosphatidylethanolamine (NAPE), which serves as precursor for N-acylethanolamines (NAEs). Exhibits high N-acyltransferase activity and low phospholipase A1/2 activity. Required for complete organelle rupture and degradation that occur during eye lens terminal differentiation, when fiber cells that compose the lens degrade all membrane-bound organelles in order to provide lens with transparency to allow the passage of light. Organelle membrane degradation is probably catalyzed by the phospholipase activity. In terms of biological role, (Microbial infection) Acts as a host factor for picornaviruses: required during early infection to promote viral genome release into the cytoplasm. May act as a cellular sensor of membrane damage at sites of virus entry, which relocalizes to sites of membrane rupture upon virus unfection. Facilitates safe passage of the RNA away from LGALS8, enabling viral genome translation by host ribosome. May also be involved in initiating pore formation, increasing pore size or in maintaining pores for genome delivery. The lipid-modifying enzyme activity is required for this process. The chain is Phospholipase A and acyltransferase 3 from Homo sapiens (Human).